A 347-amino-acid polypeptide reads, in one-letter code: Malate dehydrogenase, mitochondrial (347 aa).

A mitochondrion-targeting transit peptide spans 1-27 (MKASILRSVRSAVSRSSSSNRLLSRSF). NAD(+)-binding positions include 41-47 (GAAGGIG) and Asp67. Arg114 and Arg120 together coordinate substrate. NAD(+) is bound by residues Asn127 and 150-152 (ISN). 2 residues coordinate substrate: Asn152 and Arg186. The active-site Proton acceptor is His210. Position 261 (Met261) interacts with NAD(+).

The protein belongs to the LDH/MDH superfamily. MDH type 1 family. Homodimer.

The protein localises to the mitochondrion matrix. The catalysed reaction is (S)-malate + NAD(+) = oxaloacetate + NADH + H(+). This is Malate dehydrogenase, mitochondrial (MMDH) from Citrullus lanatus (Watermelon).